The sequence spans 630 residues: ATP-dependent zinc metalloprotease FtsH 2 (630 aa).

Residues 1 to 8 (MNNNPNRR) lie on the Cytoplasmic side of the membrane. Residues 9–29 (GSLIGPLFIYFILAMLIFMSI) form a helical membrane-spanning segment. Over 30–110 (SQLNTSNITE…YIQNTGASWW (81 aa)) the chain is Periplasmic. Residues 111 to 131 (VTMLIYMLPLIILMFFWFWMF) form a helical membrane-spanning segment. Topologically, residues 132-630 (RRSGTGEGIP…KETNLFVSYA (499 aa)) are cytoplasmic. 203 to 210 (GPPGTGKT) provides a ligand contact to ATP. His-425 is a Zn(2+) binding site. Residue Glu-426 is part of the active site. Zn(2+) contacts are provided by His-429 and Asp-502.

It in the central section; belongs to the AAA ATPase family. In the C-terminal section; belongs to the peptidase M41 family. In terms of assembly, homohexamer. Zn(2+) is required as a cofactor.

Its subcellular location is the cell inner membrane. Its function is as follows. Acts as a processive, ATP-dependent zinc metallopeptidase for both cytoplasmic and membrane proteins. Plays a role in the quality control of integral membrane proteins. The protein is ATP-dependent zinc metalloprotease FtsH 2 of Petrotoga mobilis (strain DSM 10674 / SJ95).